Reading from the N-terminus, the 133-residue chain is Ribosome-binding factor A (133 aa).

Belongs to the RbfA family. Monomer. Binds 30S ribosomal subunits, but not 50S ribosomal subunits or 70S ribosomes.

It localises to the cytoplasm. Functionally, one of several proteins that assist in the late maturation steps of the functional core of the 30S ribosomal subunit. Associates with free 30S ribosomal subunits (but not with 30S subunits that are part of 70S ribosomes or polysomes). Required for efficient processing of 16S rRNA. May interact with the 5'-terminal helix region of 16S rRNA. In Cytophaga hutchinsonii (strain ATCC 33406 / DSM 1761 / CIP 103989 / NBRC 15051 / NCIMB 9469 / D465), this protein is Ribosome-binding factor A.